Consider the following 262-residue polypeptide: Phosphatidylglycerol--prolipoprotein diacylglyceryl transferase (262 aa).

3 helical membrane-spanning segments follow: residues 17–37 (LKVHWYGLMYVIGIAATWILA), 57–77 (LVFYAAIGVVVGGRLGYALFY), and 92–112 (IWEGGMAFHGGLIGVLIAMYA). R140 contributes to the a 1,2-diacyl-sn-glycero-3-phospho-(1'-sn-glycerol) binding site. 2 helical membrane-spanning segments follow: residues 200–220 (MAVSGLFLLGYGVFRFAVEFV) and 234–254 (WLTMGQILCLPMILFGIVLLA).

The protein belongs to the Lgt family.

Its subcellular location is the cell inner membrane. It carries out the reaction L-cysteinyl-[prolipoprotein] + a 1,2-diacyl-sn-glycero-3-phospho-(1'-sn-glycerol) = an S-1,2-diacyl-sn-glyceryl-L-cysteinyl-[prolipoprotein] + sn-glycerol 1-phosphate + H(+). It participates in protein modification; lipoprotein biosynthesis (diacylglyceryl transfer). Catalyzes the transfer of the diacylglyceryl group from phosphatidylglycerol to the sulfhydryl group of the N-terminal cysteine of a prolipoprotein, the first step in the formation of mature lipoproteins. This is Phosphatidylglycerol--prolipoprotein diacylglyceryl transferase from Methylococcus capsulatus (strain ATCC 33009 / NCIMB 11132 / Bath).